Consider the following 86-residue polypeptide: Large ribosomal subunit protein eL43 (86 aa).

Residues cysteine 38–cysteine 60 form a C4-type zinc finger.

The protein belongs to the eukaryotic ribosomal protein eL43 family. It depends on Zn(2+) as a cofactor.

This is Large ribosomal subunit protein eL43 from Desulfurococcus amylolyticus (strain DSM 18924 / JCM 16383 / VKM B-2413 / 1221n) (Desulfurococcus kamchatkensis).